Reading from the N-terminus, the 384-residue chain is MLSINTTRKENELSGNLGKMKITEENKPKKVLGEITNFQRSTQKTPLKQEIKPVVKKSQQVEPLLADNPRRFVVLPIQYHDIWKMYKKAEASFWTAEEVDLSKDMAHWESLKKEEKHFISHVLAFFAASDGIVNENLVERFSKEVQVTEARCFYGFQIAMENIHSEMYSLLIDTYIKDPQERDFLFNAIETMPCVKEKADWAMRWINDDSSSYAERVVAFAAVEGIFFSGSFASIFWLKKRGIMPGLTFSNELISRDEGLHCDFACLMFSHLVNKPSQERIHQIIDEAVKIEQVFLTEALPCRLIGMNCDLMRQYIEFVADRLLLELKCDKLYNKENPFDFMEHISLEGKTNFFEKRVGEYQKMGVMSGGNTGDSHAFTLDADF.

Residues Asp-130, Glu-161, and His-164 each coordinate Fe cation. The active site involves Tyr-168. Residues Glu-224, Glu-258, and His-261 each contribute to the Fe cation site.

It belongs to the ribonucleoside diphosphate reductase small chain family. As to quaternary structure, heterodimer of a large and a small subunit. Fe cation serves as cofactor.

It catalyses the reaction a 2'-deoxyribonucleoside 5'-diphosphate + [thioredoxin]-disulfide + H2O = a ribonucleoside 5'-diphosphate + [thioredoxin]-dithiol. Provides the precursors necessary for DNA synthesis. Catalyzes the biosynthesis of deoxyribonucleotides from the corresponding ribonucleotides. The protein is Ribonucleoside-diphosphate reductase small chain of Spisula solidissima (Atlantic surf-clam).